Here is a 187-residue protein sequence, read N- to C-terminus: MRLHRTNNSRRCTILLILALKIFDFVDTLACYSCIALNYRQNVLSRNDALSPPQNRENLTALFDVLSKNNISHVEVSSSCADVTLTTQPSFLNTPIAICDMNDKCVKMDFYYSGEKVVLRNCLSNLMETVNSPKLKKYCPMYSDDRSEIKVGPMSNVSVCSCQSDLCNSSEKSSVMIYFSIAFILVL.

The first 28 residues, 1-28 (MRLHRTNNSRRCTILLILALKIFDFVDT), serve as a signal peptide directing secretion. Residues Asn58, Asn70, Asn156, and Asn168 are each glycosylated (N-linked (GlcNAc...) asparagine).

It is found in the secreted. This is an uncharacterized protein from Caenorhabditis elegans.